An 887-amino-acid chain; its full sequence is Alanine--tRNA ligase (887 aa).

Residues His-581, His-585, Cys-683, and His-687 each coordinate Zn(2+).

This sequence belongs to the class-II aminoacyl-tRNA synthetase family. Requires Zn(2+) as cofactor.

The protein resides in the cytoplasm. The enzyme catalyses tRNA(Ala) + L-alanine + ATP = L-alanyl-tRNA(Ala) + AMP + diphosphate. In terms of biological role, catalyzes the attachment of alanine to tRNA(Ala) in a two-step reaction: alanine is first activated by ATP to form Ala-AMP and then transferred to the acceptor end of tRNA(Ala). Also edits incorrectly charged Ser-tRNA(Ala) and Gly-tRNA(Ala) via its editing domain. The polypeptide is Alanine--tRNA ligase (Ehrlichia ruminantium (strain Welgevonden)).